Reading from the N-terminus, the 237-residue chain is Flagellar L-ring protein (237 aa).

Positions 1 to 24 (MNRPGFPRFSVLIASLCGITLLSG) are cleaved as a signal peptide. Residue Cys-25 is the site of N-palmitoyl cysteine attachment. A lipid anchor (S-diacylglycerol cysteine) is attached at Cys-25.

This sequence belongs to the FlgH family. In terms of assembly, the basal body constitutes a major portion of the flagellar organelle and consists of four rings (L,P,S, and M) mounted on a central rod.

It is found in the cell outer membrane. It localises to the bacterial flagellum basal body. Its function is as follows. Assembles around the rod to form the L-ring and probably protects the motor/basal body from shearing forces during rotation. This is Flagellar L-ring protein from Pseudomonas syringae pv. tomato (strain ATCC BAA-871 / DC3000).